The primary structure comprises 205 residues: Large ribosomal subunit protein uL4 (205 aa).

The tract at residues I56 to R78 is disordered.

The protein belongs to the universal ribosomal protein uL4 family. In terms of assembly, part of the 50S ribosomal subunit.

In terms of biological role, one of the primary rRNA binding proteins, this protein initially binds near the 5'-end of the 23S rRNA. It is important during the early stages of 50S assembly. It makes multiple contacts with different domains of the 23S rRNA in the assembled 50S subunit and ribosome. Functionally, forms part of the polypeptide exit tunnel. In Ehrlichia canis (strain Jake), this protein is Large ribosomal subunit protein uL4.